A 104-amino-acid chain; its full sequence is Large ribosomal subunit protein eL30 (104 aa).

It belongs to the eukaryotic ribosomal protein eL30 family.

This is Large ribosomal subunit protein eL30 (RPL30) from Leishmania major.